A 187-amino-acid polypeptide reads, in one-letter code: MKAYIYDDKPGDQRLPHDTGIDIPEPTLAKLGVVYQRIPIDSEGAWESKIDEFAKERGYKNRDRITVTREGLGEAYEEKIKSFFDEHLHEDEEIRYILAGSGYFDIRGAEGVHEEQWIRIALEAGDLIVLPAGIYHRFTVDSANTITAMRLFQDEPKWTPYSRKADGTDKLGSRDKYLETVRVGVTA.

Histidine 87, histidine 89, glutamate 93, and histidine 136 together coordinate Fe(2+). Residues histidine 87, histidine 89, glutamate 93, and histidine 136 each contribute to the Ni(2+) site.

Belongs to the acireductone dioxygenase (ARD) family. Requires Fe(2+) as cofactor. Ni(2+) serves as cofactor.

The protein resides in the cytoplasm. It localises to the nucleus. It catalyses the reaction 1,2-dihydroxy-5-(methylsulfanyl)pent-1-en-3-one + O2 = 4-methylsulfanyl-2-oxobutanoate + formate + 2 H(+). The enzyme catalyses 1,2-dihydroxy-5-(methylsulfanyl)pent-1-en-3-one + O2 = 3-(methylsulfanyl)propanoate + CO + formate + 2 H(+). It functions in the pathway amino-acid biosynthesis; L-methionine biosynthesis via salvage pathway; L-methionine from S-methyl-5-thio-alpha-D-ribose 1-phosphate: step 5/6. Catalyzes 2 different reactions between oxygen and the acireductone 1,2-dihydroxy-3-keto-5-methylthiopentene (DHK-MTPene) depending upon the metal bound in the active site. Fe-containing acireductone dioxygenase (Fe-ARD) produces formate and 2-keto-4-methylthiobutyrate (KMTB), the alpha-ketoacid precursor of methionine in the methionine recycle pathway. Ni-containing acireductone dioxygenase (Ni-ARD) produces methylthiopropionate, carbon monoxide and formate, and does not lie on the methionine recycle pathway. This chain is Acireductone dioxygenase, found in Cryptococcus neoformans var. neoformans serotype D (strain JEC21 / ATCC MYA-565) (Filobasidiella neoformans).